A 333-amino-acid chain; its full sequence is MKKRTIATGLVTLLSIVTLAACSKTNQNSKIATMKGDTITVADFYNEVKNSTASKQAVLSLLVSKVFEKQYGDKVSDKEVTKAYNEAAKYYGDSFSSALASRGYTKEDYKKQIRSEKLIEYAVKEEAKKEITDASYKSAYKDYKPEVTAQVIQLDSEDKAKSVLEEAKADGADFAKIAKDNTKGDKTEYSFDSGSTNLPSQVLSAALNLDKDGVSDVIKASDSTTYKPVYYIVKITKKTDKNADWKAYKKRLKEIIVSQKLNDSNFRNAVIGKAFKKANVKIKDKAFSEILSQYAAASGSGSSGSTTTTTAASSAATTAADDQTTAAETTAAE.

The signal sequence occupies residues 1–21 (MKKRTIATGLVTLLSIVTLAA). C22 is lipidated: N-palmitoyl cysteine. C22 carries S-diacylglycerol cysteine lipidation. Residues 144–237 (KPEVTAQVIQ…PVYYIVKITK (94 aa)) form the PpiC domain. The interval 296–333 (AASGSGSSGSTTTTTAASSAATTAADDQTTAAETTAAE) is disordered.

Belongs to the PrsA family.

Its subcellular location is the cell membrane. The catalysed reaction is [protein]-peptidylproline (omega=180) = [protein]-peptidylproline (omega=0). Its function is as follows. Plays a major role in protein secretion by helping the post-translocational extracellular folding of several secreted proteins. The sequence is that of Foldase protein PrsA from Streptococcus mutans serotype c (strain ATCC 700610 / UA159).